The chain runs to 576 residues: Calcium-dependent protein kinase 11 (576 aa).

Residue Gly2 is the site of N-myristoyl glycine attachment. The tract at residues Pro27–Arg88 is disordered. The span at Ala41 to Glu56 shows a compositional bias: low complexity. In terms of domain architecture, Protein kinase spans Tyr113–Val371. Residues Leu119 to Thr127 and Lys142 contribute to the ATP site. The active-site Proton acceptor is Asp237. Residues Ala377–Ile407 form an autoinhibitory domain region. 4 consecutive EF-hand domains span residues Glu414–Asn449, Leu450–Val485, Glu486–Gly521, and Asp522–Ala555. Residues Asp427, Asp429, Ser431, His433, Glu438, Asp463, Asp465, Ser467, Thr469, Glu474, Asp499, Asp501, Ser503, Tyr505, Glu510, Asp533, Asp535, Asp537, Arg539, and Glu544 each contribute to the Ca(2+) site.

It belongs to the protein kinase superfamily. Ser/Thr protein kinase family. CDPK subfamily.

It localises to the membrane. The enzyme catalyses L-seryl-[protein] + ATP = O-phospho-L-seryl-[protein] + ADP + H(+). It carries out the reaction L-threonyl-[protein] + ATP = O-phospho-L-threonyl-[protein] + ADP + H(+). Activated by calcium. Autophosphorylation may play an important role in the regulation of the kinase activity. In terms of biological role, may play a role in signal transduction pathways that involve calcium as a second messenger. In Oryza sativa subsp. japonica (Rice), this protein is Calcium-dependent protein kinase 11.